The sequence spans 541 residues: tRNA uridine(34) acetyltransferase (541 aa).

The radical S-adenosyl-L-methionine (rSAM) stretch occupies residues 76–336 (KPVRTISGVA…GEYKPYREEE (261 aa)). Positions 79–350 (RTISGVAVVA…ISYAKSIMPK (272 aa)) constitute a Radical SAM core domain. Residues C96, C101, and C104 each contribute to the [4Fe-4S] cluster site. Acetyl-CoA-binding positions include K156, 467-470 (QLHV), 491-493 (YGR), and Y524. The region spanning 401–541 (VMYKKGIMPD…VGAYMGKYLE (141 aa)) is the N-acetyltransferase domain.

Belongs to the ELP3 family. The cofactor is [4Fe-4S] cluster.

The enzyme catalyses uridine(34) in tRNA + acetyl-CoA + S-adenosyl-L-methionine + H2O = 5-(carboxymethyl)uridine(34) in tRNA + 5'-deoxyadenosine + L-methionine + CoA + 2 H(+). It participates in tRNA modification. TRNA uridine(34) acetyltransferase, which mediates formation of carboxymethyluridine in the wobble base at position 34 in tRNAs. The proposed mechanism is the following: (i) recruits S-adenosyl-L-methionine and cleaves it to generate a 5'-deoxyadenosine radical (5'-dA) in the radical S-adenosyl-L-methionine (rSAM) region, (ii) hydrolyzes acetyl-CoA in the N-acetyltransferase domain and (iii) an acetyl radical is formed by the products of the two domains and (iv) is transferred onto the C5 position of uridine(34) in the bound tRNA molecule. Does not show protein lysine acetyltransferase activity. The polypeptide is tRNA uridine(34) acetyltransferase (Methanocaldococcus jannaschii (strain ATCC 43067 / DSM 2661 / JAL-1 / JCM 10045 / NBRC 100440) (Methanococcus jannaschii)).